Reading from the N-terminus, the 695-residue chain is Potassium voltage-gated channel subfamily KQT member 4 (695 aa).

Positions 1 to 21 (MAEAPPRRLGLGPPPGDAPRA) are disordered. Topologically, residues 1–96 (MAEAPPRRLG…VYNVLERPRG (96 aa)) are cytoplasmic. An a 1,2-diacyl-sn-glycero-3-phospho-(1D-myo-inositol-4,5-bisphosphate)-binding site is contributed by R93. The helical transmembrane segment at 97–118 (WAFVYHVFIFLLVFSCLVLSVL) threads the bilayer. The Extracellular segment spans residues 119 to 129 (STIQEHQELAN). A helical membrane pass occupies residues 130–152 (ECLLILEFVMIVVFGLEYIIRVW). The Cytoplasmic portion of the chain corresponds to 153 to 168 (SAGCCCRYRGWQGRFR). Residues 169–191 (FARKPFCVIDFIVFVASVAVIAA) traverse the membrane as a helical segment. K172 is an a 1,2-diacyl-sn-glycero-3-phospho-(1D-myo-inositol-4,5-bisphosphate) binding site. Topologically, residues 192–202 (GTQGNIFATSA) are extracellular. A helical; Voltage-sensor membrane pass occupies residues 203 to 223 (LRSMRFLQILRMVRMDRRGGT). A 1,2-diacyl-sn-glycero-3-phospho-(1D-myo-inositol-4,5-bisphosphate) is bound by residues R219, R220, K225, and S235. Topologically, residues 224–235 (WKLLGSVVYAHS) are cytoplasmic. The helical transmembrane segment at 236-258 (KELITAWYIGFLVLIFASFLVYL) threads the bilayer. Residues 259–270 (AEKDANSDFSSY) lie on the Extracellular side of the membrane. The segment at residues 271 to 292 (ADSLWWGTITLTTIGYGDKTPH) is an intramembrane region (pore-forming). Position 293 (T293) is a topological domain, extracellular. A helical membrane pass occupies residues 294-322 (WLGRVLAAGFALLGISFFALPAGILGSGF). Residues 323–695 (ALKVQEQHRQ…ISRSVSTNMD (373 aa)) are Cytoplasmic-facing. A 1,2-diacyl-sn-glycero-3-phospho-(1D-myo-inositol-4,5-bisphosphate)-binding residues include H330 and K333. The tract at residues 342-351 (AANLIQAAWR) is interaction with CALM. The disordered stretch occupies residues 441–483 (RMSSSQKRTGPSKQHLAPPPIPTSPSSEQVGEASSPSKVQKSW). Composition is skewed to polar residues over residues 442 to 452 (MSSSQKRTGPS) and 464 to 483 (SPSS…QKSW). The segment at 535–549 (RSVRILKFLVAKRKF) is interaction with CALM. Positions 546 to 650 (KRKFKETLRP…SRCLRSGTSA (105 aa)) are C-terminal assembly domain (tetramerization). The disordered stretch occupies residues 588–608 (GRGPGDRKTREKGDKGPSDTE). The segment covering 591–605 (PGDRKTREKGDKGPS) has biased composition (basic and acidic residues).

This sequence belongs to the potassium channel family. KQT (TC 1.A.1.15) subfamily. Kv7.4/KCNQ4 sub-subfamily. As to quaternary structure, homotetramer. Interacts (via C-terminus) with calmodulin; forms a heterooctameric structure (with 4:4 KCNQ1:CALM stoichiometry); the interaction is calcium-independent, constitutive, participates in the proper assembly of a functional channel. The interaction with calcium-free CALM controls channel trafficking whereas interaction with calcium-bound CALM regulates channel gating. May form a functional heteromultimeric channel with KCNQ3. Interacts with HSP90AB1; promotes cell surface expression of KCNQ4. Expressed in both the inner (IHCs) and the outer hair cells (OHCs) of the cochlea. Reciprocal longitudinal gradients of expression is present in IHCs and OHCs. The strongest expression in IHCs is in the base of the cochlea and in the apex for OHCs. A basal to apical gradient of expression is also present in both type I and type II spiral ganglion cells.

The protein localises to the basal cell membrane. The catalysed reaction is K(+)(in) = K(+)(out). Two molecules of phosphatidylinositol-4,5-bisphosphate (PIP2-I and PIP2-II) are essential to activate KCNQ4 channel by inducing the coupling of the voltage-sensing domain (VSD) and the pore-forming domain (PD). Upon channel activation, PIP2-I and PIP2-II disrupt the VSD-calmodulin/CALM interaction, causing the release of CALM from the VSD which triggers the opening of the gate. Calcium suppresses KCNQ4 channel current through calcium-bound CALM C-terminus. Therefore CALM acts as calcium sensor that controls channel activity. Functionally, pore-forming subunit of the voltage-gated potassium (Kv) channel involved in the regulation of sensory cells excitability in the cochlea. KCNQ4/Kv7.4 channel is composed of 4 pore-forming subunits assembled as tetramers. Promotes the outflow of potassium ions in the repolarization phase of action potential which plays a role in regulating membrane potential of excitable cells. The channel conducts a slowly activating and deactivating current. Current often shows some inward rectification at positive potentials. Channel may be selectively permeable in vitro to other cations besides potassium, in decreasing order of affinity K(+) = Rb(+) &gt; Cs(+) &gt; Na(+). Important for normal physiological function of inner ear such as sensory perception of sound. The polypeptide is Potassium voltage-gated channel subfamily KQT member 4 (Rattus norvegicus (Rat)).